We begin with the raw amino-acid sequence, 741 residues long: uncharacterized protein (741 aa).

The N-terminal stretch at methionine 1 to alanine 22 is a signal peptide.

This is an uncharacterized protein from Archaeoglobus fulgidus (strain ATCC 49558 / DSM 4304 / JCM 9628 / NBRC 100126 / VC-16).